The sequence spans 252 residues: 2-succinyl-6-hydroxy-2,4-cyclohexadiene-1-carboxylate synthase (252 aa).

It belongs to the AB hydrolase superfamily. MenH family. As to quaternary structure, monomer.

It catalyses the reaction 5-enolpyruvoyl-6-hydroxy-2-succinyl-cyclohex-3-ene-1-carboxylate = (1R,6R)-6-hydroxy-2-succinyl-cyclohexa-2,4-diene-1-carboxylate + pyruvate. It participates in quinol/quinone metabolism; 1,4-dihydroxy-2-naphthoate biosynthesis; 1,4-dihydroxy-2-naphthoate from chorismate: step 3/7. Its pathway is quinol/quinone metabolism; menaquinone biosynthesis. Functionally, catalyzes a proton abstraction reaction that results in 2,5-elimination of pyruvate from 2-succinyl-5-enolpyruvyl-6-hydroxy-3-cyclohexene-1-carboxylate (SEPHCHC) and the formation of 2-succinyl-6-hydroxy-2,4-cyclohexadiene-1-carboxylate (SHCHC). This chain is 2-succinyl-6-hydroxy-2,4-cyclohexadiene-1-carboxylate synthase, found in Shigella flexneri serotype 5b (strain 8401).